A 663-amino-acid chain; its full sequence is Protein MICRORCHIDIA 6 (663 aa).

The interval 1 to 77 (MSHDRSVNVS…PADDAGVTSS (77 aa)) is disordered. Residues 49–62 (SVGQSAGQSSTSVV) show a composition bias toward polar residues. The Nuclear localization signal signature appears at 552–559 (KRKEHPDS). The stretch at 614 to 659 (DRKVRSQNLEVKAMNLRSELENYKSEYERLMVELQALDLVKDEHRR) forms a coiled coil.

Belongs to the MORC ATPase protein family. Homodimer and heterodimers with MORC1/CRT1 and MORC2. Interacts directly with SUVH9. Component of an RNA-directed DNA methylation (RdDM) complex that contains at least MORC6, MORC1/CRT1, MORC2, SWI3D and SUVH9. Stimulated by interaction with DMS3. Interacts with IDN2, SWI3B, SWI3C and SWI3D. Requires Mg(2+) as cofactor. The cofactor is Mn(2+).

Its subcellular location is the nucleus. With respect to regulation, stimulated by DMS3. Involved in RNA-directed DNA methylation (RdDM) as a component of the RdDM machinery and required for gene silencing. Together with SUVH2 and SUVH9, regulates the silencing of some transposable elements (TEs). Exhibits ATPase activity. May also be involved in the regulation of chromatin architecture/condensation to maintain gene silencing. Binds DNA/RNA in a non-specific manner and exhibits endonuclease activity. Probably involved in DNA repair. Positive regulator of defense against the oomycete Hyaloperonospora arabidopsidis (Hpa). The polypeptide is Protein MICRORCHIDIA 6 (Arabidopsis thaliana (Mouse-ear cress)).